We begin with the raw amino-acid sequence, 371 residues long: DNA replication and repair protein RecF (371 aa).

Position 30–37 (glycine 30–threonine 37) interacts with ATP.

Belongs to the RecF family.

It is found in the cytoplasm. Functionally, the RecF protein is involved in DNA metabolism; it is required for DNA replication and normal SOS inducibility. RecF binds preferentially to single-stranded, linear DNA. It also seems to bind ATP. In Staphylococcus epidermidis (strain ATCC 12228 / FDA PCI 1200), this protein is DNA replication and repair protein RecF.